The sequence spans 1637 residues: Kinesin-like protein KIF21B (1637 aa).

Positions 8 to 370 (CVKVAVRIRP…LKYANRARNI (363 aa)) constitute a Kinesin motor domain. Residue 87-94 (GQTGAGKT) participates in ATP binding. Coiled coils occupy residues 376 to 604 (VNQD…EEEG) and 631 to 824 (NFQA…ALRR). Positions 400-1099 (MEYKAGKRVI…LQALIYNVQQ (700 aa)) are interaction with TRIM3. Positions 509 to 533 (ASARSPYSLGASPAAPAFGGSPASS) are enriched in low complexity. Disordered stretches follow at residues 509–538 (ASAR…EDAS) and 552–628 (KKKE…PEEK). A compositionally biased stretch (acidic residues) spans 578–627 (NSEETDENEAEEEEEERDESGCEEEEGREDEDEDSGSEESLVDSDSDPEE). Ser-579 carries the phosphoserine modification. The residue at position 582 (Thr-582) is a Phosphothreonine. Disordered stretches follow at residues 830-865 (SERV…GARS) and 880-906 (FLGD…GASQ). Residues 846–865 (SGAEVSASTTSSEAESGARS) are compositionally biased toward low complexity. Residues 928 to 1016 (MQRMTIVNLE…EETKEELDST (89 aa)) are a coiled coil. A phosphoserine mark is found at Ser-1149, Ser-1167, and Ser-1215. A compositionally biased stretch (polar residues) spans 1194-1217 (RTVSLPTRGSTFPRQSRATETSPL). Positions 1194-1251 (RTVSLPTRGSTFPRQSRATETSPLTRRKSYDRGQPIRSTDVGFTPPSSPPTRPRNDRN) are disordered. The residue at position 1237 (Thr-1237) is a Phosphothreonine. Phosphoserine is present on Ser-1241. WD repeat units lie at residues 1306–1343 (GHTK…EIAA), 1346–1384 (GHPN…KCIR), 1410–1448 (QGEH…PVGK), 1451–1493 (GHIG…TGTI), 1502–1539 (PHYD…LIQQ), 1543–1582 (AHKD…PIGE), and 1585–1622 (GHDS…TPCL).

Belongs to the TRAFAC class myosin-kinesin ATPase superfamily. Kinesin family. As to quaternary structure, interacts with TRIM3; the interaction positively affects motility of KIF21B. Interacts with GABARAP and GABA(A) receptor subunits: GABRG2, GABRA1 and GABRA2. May interact with GABA(A) receptor subunits: GABRB2 and GABRB3.

Its subcellular location is the cytoplasm. The protein localises to the cytoskeleton. It localises to the cell projection. It is found in the dendrite. The protein resides in the growth cone. Its subcellular location is the axon. The protein localises to the cytoplasmic vesicle. In terms of biological role, plus-end directed microtubule-dependent motor protein which displays processive activity. Is involved in regulation of microtubule dynamics, synapse function and neuronal morphology, including dendritic tree branching and spine formation. Plays a role in lerning and memory. Involved in delivery of gamma-aminobutyric acid (GABA(A)) receptor to cell surface. The sequence is that of Kinesin-like protein KIF21B (KIF21B) from Homo sapiens (Human).